Here is a 305-residue protein sequence, read N- to C-terminus: Probable alpha-L-glutamate ligase (305 aa).

Residues 119–301 (LQVLAAQHIP…IAGLIIDYLL (183 aa)) enclose the ATP-grasp domain. Residues lysine 155, 192-193 (DF), aspartate 201, and 225-227 (RAN) each bind ATP. Positions 262, 274, and 276 each coordinate Mg(2+). Residues aspartate 262, glutamate 274, and asparagine 276 each coordinate Mn(2+).

This sequence belongs to the RimK family. The cofactor is Mg(2+). Mn(2+) serves as cofactor.

In Haemophilus ducreyi (strain 35000HP / ATCC 700724), this protein is Probable alpha-L-glutamate ligase.